Reading from the N-terminus, the 365-residue chain is Transcription factor aptf-1 (365 aa).

Disordered stretches follow at residues 13–40 (EFVRGSQCDEEDEEEQQRQSSQRPPFYE) and 93–126 (TPPQQQQQQGTGGSGEEDYCIPKSEDRDHSSNYS). The H-S-H (helix-span-helix), dimerization stretch occupies residues 223 to 356 (RRKQANVTAW…MIDESIKYID (134 aa)).

This sequence belongs to the AP-2 family. Binds DNA as a dimer. In terms of tissue distribution, expressed in five interneurons AIB, RIB and RIS.

It localises to the nucleus. In terms of biological role, transcription factor, which is required in the single sleep-active ring interneuron RIS for sleep-like behavioral quiescence induced by neuropeptide signaling in larvae. Regulates gene expression of sleep-inducing FMRFamide-like neuropeptide flp-11 in RIS. This is Transcription factor aptf-1 from Caenorhabditis elegans.